The following is a 617-amino-acid chain: Proline--tRNA ligase (617 aa).

This sequence belongs to the class-II aminoacyl-tRNA synthetase family. ProS type 1 subfamily. In terms of assembly, homodimer.

The protein localises to the cytoplasm. It catalyses the reaction tRNA(Pro) + L-proline + ATP = L-prolyl-tRNA(Pro) + AMP + diphosphate. Functionally, catalyzes the attachment of proline to tRNA(Pro) in a two-step reaction: proline is first activated by ATP to form Pro-AMP and then transferred to the acceptor end of tRNA(Pro). As ProRS can inadvertently accommodate and process non-cognate amino acids such as alanine and cysteine, to avoid such errors it has two additional distinct editing activities against alanine. One activity is designated as 'pretransfer' editing and involves the tRNA(Pro)-independent hydrolysis of activated Ala-AMP. The other activity is designated 'posttransfer' editing and involves deacylation of mischarged Ala-tRNA(Pro). The misacylated Cys-tRNA(Pro) is not edited by ProRS. The polypeptide is Proline--tRNA ligase (Streptococcus pneumoniae (strain CGSP14)).